The primary structure comprises 134 residues: Ribosome-binding factor A (134 aa).

The protein belongs to the RbfA family. As to quaternary structure, monomer. Binds 30S ribosomal subunits, but not 50S ribosomal subunits or 70S ribosomes.

It is found in the cytoplasm. One of several proteins that assist in the late maturation steps of the functional core of the 30S ribosomal subunit. Associates with free 30S ribosomal subunits (but not with 30S subunits that are part of 70S ribosomes or polysomes). Required for efficient processing of 16S rRNA. May interact with the 5'-terminal helix region of 16S rRNA. This Bdellovibrio bacteriovorus (strain ATCC 15356 / DSM 50701 / NCIMB 9529 / HD100) protein is Ribosome-binding factor A.